Here is a 417-residue protein sequence, read N- to C-terminus: Magnesium-protoporphyrin IX monomethyl ester [oxidative] cyclase, chloroplastic (417 aa).

A chloroplast-targeting transit peptide spans 1–45 (MASAMELSLLNPAMHHYGIAAKTASHLPVVPARRASSGAVRFRVR).

The protein belongs to the AcsF family. Fe cation serves as cofactor.

The protein resides in the plastid. Its subcellular location is the chloroplast membrane. The catalysed reaction is Mg-protoporphyrin IX 13-monomethyl ester + 3 NADPH + 3 O2 + 2 H(+) = 3,8-divinyl protochlorophyllide a + 3 NADP(+) + 5 H2O. Its pathway is porphyrin-containing compound metabolism; chlorophyll biosynthesis. Functionally, catalyzes the formation of the isocyclic ring in chlorophyll biosynthesis. Mediates the cyclase reaction, which results in the formation of divinylprotochlorophyllide (Pchlide) characteristic of all chlorophylls from magnesium-protoporphyrin IX 13-monomethyl ester (MgPMME). The polypeptide is Magnesium-protoporphyrin IX monomethyl ester [oxidative] cyclase, chloroplastic (CRD1) (Hordeum vulgare (Barley)).